The following is a 1035-amino-acid chain: NHS-like protein 3 (1035 aa).

The N-myristoyl glycine moiety is linked to residue Val2. 3 disordered regions span residues 23-44 (KAENDKHLSVGPGQGPGSAVDE), 76-105 (QEKQKLNKGGWDHGDTQSIQSSRTGPDEDN), and 133-162 (IQRKGSTFRPHDSFPKSGKSGRRRRERRST). Residues 76–90 (QEKQKLNKGGWDHGD) show a composition bias toward basic and acidic residues. Ser93, Ser138, Ser145, and Ser161 each carry phosphoserine. Thr162 carries the post-translational modification Phosphothreonine. A Phosphoserine modification is found at Ser215. Position 320 is an asymmetric dimethylarginine (Arg320). 7 positions are modified to phosphoserine: Ser322, Ser327, Ser330, Ser338, Ser339, Ser341, and Ser342. 2 disordered regions span residues 332–869 (RSLG…APSS) and 885–1035 (SEGL…KELA). Residues 338–365 (SSVSSPQPRSRHPSSSSDTWSHSQSSDT) are compositionally biased toward low complexity. Over residues 366–388 (IVSDGSTLSSKGGSEGQPESSTA) the composition is skewed to polar residues. Residues Ser400, Ser404, and Ser409 each carry the phosphoserine modification. Residues 411 to 429 (AEASDTLSIRSSGQLSGRS) show a composition bias toward polar residues. Residues 431–449 (SLRKLKRPPPPPRRTHSLH) are compositionally biased toward basic residues. Residues 517-532 (RTLSPSSGYSSQSGTP) are compositionally biased toward low complexity. A Phosphothreonine modification is found at Thr531. The segment covering 543-552 (PASPGKAQPP) has biased composition (pro residues). Ser545 bears the Phosphoserine mark. Residues 562–589 (SPGASVSSSLTSLCSSSSDPAPSDRSGP) are compositionally biased toward low complexity. Thr593 bears the Phosphothreonine mark. Positions 602–624 (PPHPKVPAPFSPPPSKPRSPNPA) are enriched in pro residues. Ser612 is modified (phosphoserine). 2 stretches are compositionally biased toward low complexity: residues 625–645 (APALAAPAVVPGPVSTTDASP) and 652–662 (QTTLTPLQESP). Ser669 and Ser673 each carry phosphoserine. Pro residues-rich tracts occupy residues 669–685 (SPPPSPPPSYHPPPPPT) and 709–718 (NWPPPPPPAP). Residues 737-765 (SVASPEPAGPSGSPELVSSPAASSSSATA) are compositionally biased toward low complexity. A compositionally biased stretch (pro residues) spans 771-784 (PGSPDPPPAPPAPA). The segment covering 838-848 (GAPTPALGPSA) has biased composition (low complexity). Phosphoserine occurs at positions 858, 862, and 868. The segment covering 894–906 (NGPPEAEPRPPQS) has biased composition (pro residues). Phosphoserine is present on residues Ser929, Ser959, Ser971, and Ser979. A compositionally biased stretch (pro residues) spans 961 to 980 (KAPPPVARKPSVGVPPPASP). The span at 999–1008 (TQDRTKRELA) shows a compositional bias: basic and acidic residues.

Expressed in lung.

Functionally, able to directly activate the TNF-NFkappaB signaling pathway. This is NHS-like protein 3 from Homo sapiens (Human).